Consider the following 90-residue polypeptide: MARTVFCTRLQKEADGLDFQLYPGELGKRIFDNICKEAWAQWQTKQTMLINEKKLNMMDPEHRKLLEQEMVNFLFEGKEVHIEGYTPPAK.

Belongs to the Fe(2+)-trafficking protein family.

Functionally, could be a mediator in iron transactions between iron acquisition and iron-requiring processes, such as synthesis and/or repair of Fe-S clusters in biosynthetic enzymes. The sequence is that of Probable Fe(2+)-trafficking protein from Vibrio cholerae serotype O1 (strain ATCC 39541 / Classical Ogawa 395 / O395).